We begin with the raw amino-acid sequence, 156 residues long: Small ribosomal subunit protein uS7 (156 aa).

This sequence belongs to the universal ribosomal protein uS7 family. Part of the 30S ribosomal subunit. Contacts proteins S9 and S11.

In terms of biological role, one of the primary rRNA binding proteins, it binds directly to 16S rRNA where it nucleates assembly of the head domain of the 30S subunit. Is located at the subunit interface close to the decoding center, probably blocks exit of the E-site tRNA. The polypeptide is Small ribosomal subunit protein uS7 (Mesomycoplasma hyopneumoniae (strain 232) (Mycoplasma hyopneumoniae)).